The sequence spans 230 residues: 2,3-bisphosphoglycerate-dependent phosphoglycerate mutase (230 aa).

Substrate contacts are provided by residues 8 to 15 (RHGESEWN), 21 to 22 (TG), R60, 87 to 90 (ERHY), K98, 114 to 115 (RR), and 183 to 184 (GN). Residue H9 is the Tele-phosphohistidine intermediate of the active site. The active-site Proton donor/acceptor is the E87.

Belongs to the phosphoglycerate mutase family. BPG-dependent PGAM subfamily.

The enzyme catalyses (2R)-2-phosphoglycerate = (2R)-3-phosphoglycerate. It participates in carbohydrate degradation; glycolysis; pyruvate from D-glyceraldehyde 3-phosphate: step 3/5. Functionally, catalyzes the interconversion of 2-phosphoglycerate and 3-phosphoglycerate. The chain is 2,3-bisphosphoglycerate-dependent phosphoglycerate mutase from Streptococcus uberis (strain ATCC BAA-854 / 0140J).